Consider the following 182-residue polypeptide: Transmembrane and coiled-coil domain-containing protein 2 (182 aa).

The helical transmembrane segment at 51 to 71 (VQIILRISFLILLGIGIYALW) threads the bilayer. Residues 124–151 (GLQEKILKKLKTVENKMKNLEGIIVAQK) are a coiled coil.

The protein resides in the membrane. In Homo sapiens (Human), this protein is Transmembrane and coiled-coil domain-containing protein 2 (TMCO2).